Consider the following 196-residue polypeptide: Recombination protein RecR (196 aa).

A C4-type zinc finger spans residues 55-70; that stretch reads CELCGNLESESPCSIC. The 96-residue stretch at 78-173 folds into the Toprim domain; that stretch reads DIVCVVEEIT…KLSFLAHGIP (96 aa).

The protein belongs to the RecR family.

May play a role in DNA repair. It seems to be involved in an RecBC-independent recombinational process of DNA repair. It may act with RecF and RecO. The chain is Recombination protein RecR from Neorickettsia sennetsu (strain ATCC VR-367 / Miyayama) (Ehrlichia sennetsu).